We begin with the raw amino-acid sequence, 125 residues long: Fumarate reductase subunit D (125 aa).

Helical transmembrane passes span 29-49 (VTAL…PLGW), 64-84 (NPIT…HAAH), and 102-122 (VIAL…GWML).

The protein belongs to the FrdD family. As to quaternary structure, part of an enzyme complex containing four subunits: a flavoprotein (FrdA), an iron-sulfur protein (FrdB), and two hydrophobic anchor proteins (FrdC and FrdD).

Its subcellular location is the cell membrane. Its function is as follows. Anchors the catalytic components of the fumarate reductase complex to the cell membrane, binds quinones. The chain is Fumarate reductase subunit D from Mycobacterium bovis (strain BCG / Tokyo 172 / ATCC 35737 / TMC 1019).